A 147-amino-acid chain; its full sequence is MVHLTGEEKGIVTGLWGKVNVDEVGGEALGRLLVVYPWTQRFFDSFGDLSSAAAVMGNAKVKAHGKKVLDSFSEGLKNLDNLKGTFAKLSELHCDKLHVDPENFRLLGNVLVCVLARNFGKEFTPQVQAAYQKVVVGVATALAHKYH.

Val-2 carries the N-acetylvaline modification. The Globin domain occupies 3-147 (HLTGEEKGIV…VATALAHKYH (145 aa)). At Thr-13 the chain carries Phosphothreonine. Ser-45 carries the phosphoserine modification. Lys-60 bears the N6-acetyllysine mark. Heme b is bound at residue His-64. Lys-83 carries the post-translational modification N6-acetyllysine. His-93 provides a ligand contact to heme b. Position 94 is an S-nitrosocysteine (Cys-94). Lys-145 is subject to N6-acetyllysine.

The protein belongs to the globin family. In terms of assembly, heterotetramer of two alpha chains and two beta chains. In terms of tissue distribution, red blood cells.

Its function is as follows. Involved in oxygen transport from the lung to the various peripheral tissues. This Rhinolophus ferrumequinum (Greater horseshoe bat) protein is Hemoglobin subunit beta (HBB).